A 108-amino-acid chain; its full sequence is Precursor of CEP16 (108 aa).

The signal sequence occupies residues 1–27 (MVMAKNLTKFYVVFLVVLMMVVSLLLA). A propeptide spanning residues 28 to 92 (IEGRPVKDSS…VGHHRAKGYK (65 aa)) is cleaved from the precursor. Asn50 and Asn98 each carry an N-linked (GlcNAc...) asparagine glycan. Residues 76 to 108 (QSGPSPGVGHHRAKGYKMFGRANDSGPSPGVGH) are disordered. 2 positions are modified to hydroxyproline: Pro102 and Pro104.

The protein belongs to the C-terminally encoded plant signaling peptide (CEP) family. As to quaternary structure, interacts with CEP receptors (e.g. CEPR1 and CEPR2). Post-translationally, the mature small signaling peptide is generated by proteolytic processing of the longer precursor.

Its subcellular location is the secreted. It localises to the extracellular space. It is found in the apoplast. Extracellular signaling peptide that may regulate primary root growth rate and systemic nitrogen (N)-demand signaling. The chain is Precursor of CEP16 from Arabidopsis thaliana (Mouse-ear cress).